Here is a 199-residue protein sequence, read N- to C-terminus: MKIVLATGNAGKLAEMTRMLQGYDAEVVRQGHLGIDSPAETGLTFVENALIKARHCAERSGLPAVADDSGLAVPALGGEPGIYSARYAGSDAGDAANIERLLAELSERGQGDRRGTFHCVMVYLRHAADPAPVIAHGSWTGRIVETPRGHHGFGYDPVFEDPELGQTAAELDAPAKDARSHRGQALRALIQGIAAEVAG.

7–12 (TGNAGK) provides a ligand contact to substrate. Catalysis depends on Asp68, which acts as the Proton acceptor. A Mg(2+)-binding site is contributed by Asp68. Residues Ser69, 153-156 (FGYD), Lys176, and 181-182 (HR) contribute to the substrate site.

This sequence belongs to the HAM1 NTPase family. As to quaternary structure, homodimer. Mg(2+) is required as a cofactor.

The enzyme catalyses XTP + H2O = XMP + diphosphate + H(+). The catalysed reaction is dITP + H2O = dIMP + diphosphate + H(+). It carries out the reaction ITP + H2O = IMP + diphosphate + H(+). Its function is as follows. Pyrophosphatase that catalyzes the hydrolysis of nucleoside triphosphates to their monophosphate derivatives, with a high preference for the non-canonical purine nucleotides XTP (xanthosine triphosphate), dITP (deoxyinosine triphosphate) and ITP. Seems to function as a house-cleaning enzyme that removes non-canonical purine nucleotides from the nucleotide pool, thus preventing their incorporation into DNA/RNA and avoiding chromosomal lesions. The sequence is that of dITP/XTP pyrophosphatase from Halorhodospira halophila (strain DSM 244 / SL1) (Ectothiorhodospira halophila (strain DSM 244 / SL1)).